Reading from the N-terminus, the 414-residue chain is Glucose-1-phosphate adenylyltransferase (414 aa).

Residues Gly-164, 181 to 182 (EK), and Ser-199 contribute to the alpha-D-glucose 1-phosphate site.

It belongs to the bacterial/plant glucose-1-phosphate adenylyltransferase family. Homotetramer.

It catalyses the reaction alpha-D-glucose 1-phosphate + ATP + H(+) = ADP-alpha-D-glucose + diphosphate. Its pathway is glycan biosynthesis; glycogen biosynthesis. Involved in the biosynthesis of ADP-glucose, a building block required for the elongation reactions to produce glycogen. Catalyzes the reaction between ATP and alpha-D-glucose 1-phosphate (G1P) to produce pyrophosphate and ADP-Glc. The sequence is that of Glucose-1-phosphate adenylyltransferase from Leifsonia xyli subsp. xyli (strain CTCB07).